The chain runs to 139 residues: ATP synthase epsilon chain (139 aa).

The protein belongs to the ATPase epsilon chain family. In terms of assembly, F-type ATPases have 2 components, CF(1) - the catalytic core - and CF(0) - the membrane proton channel. CF(1) has five subunits: alpha(3), beta(3), gamma(1), delta(1), epsilon(1). CF(0) has three main subunits: a, b and c.

Its subcellular location is the cell inner membrane. Its function is as follows. Produces ATP from ADP in the presence of a proton gradient across the membrane. The protein is ATP synthase epsilon chain of Salmonella typhimurium (strain LT2 / SGSC1412 / ATCC 700720).